A 172-amino-acid polypeptide reads, in one-letter code: Biogenesis of lysosome-related organelles complex 1 subunit 6 (172 aa).

Disordered stretches follow at residues 1-36 (MSVPGPSSPDGALTRPPYCLEAGEPTPGLSDTSPDE) and 135-172 (RALKLQQKRQKEELEREQQREKEFEREKQLTARPAKRM). Residues 63 to 167 (DLQRSKQALQ…FEREKQLTAR (105 aa)) are a coiled coil. Over residues 143–164 (RQKEELEREQQREKEFEREKQL) the composition is skewed to basic and acidic residues.

Belongs to the BLOC1S6 family. Interacts with BLOC1S4 and DTNBP1/BLOC1S7. Homodimer. Component of the biogenesis of lysosome-related organelles complex 1 (BLOC-1) composed of BLOC1S1, BLOC1S2, BLOC1S3, BLOC1S4, BLOC1S5, BLOC1S6, DTNBP1/BLOC1S7 and SNAPIN/BLOC1S8. Octamer composed of one copy each BLOC1S1, BLOC1S2, BLOC1S3, BLOC1S4, BLOC1S5, BLOC1S6, DTNBP1/BLOC1S7 and SNAPIN/BLOC1S8. The BLOC-1 complex associates with the AP-3 protein complex and membrane protein cargos. Interacts with BLOC1S5, F-actin, SNAP25 isoform 1 and isoform 2, SNAP47 and STX12. Post-translationally, phosphorylated. As to expression, widely expressed.

The protein localises to the cytoplasm. The protein resides in the membrane. Component of the BLOC-1 complex, a complex that is required for normal biogenesis of lysosome-related organelles (LRO), such as platelet dense granules and melanosomes. In concert with the AP-3 complex, the BLOC-1 complex is required to target membrane protein cargos into vesicles assembled at cell bodies for delivery into neurites and nerve terminals. The BLOC-1 complex, in association with SNARE proteins, is also proposed to be involved in neurite extension. May play a role in intracellular vesicle trafficking, particularly in the vesicle-docking and fusion process. The sequence is that of Biogenesis of lysosome-related organelles complex 1 subunit 6 (BLOC1S6) from Homo sapiens (Human).